Here is a 265-residue protein sequence, read N- to C-terminus: Protein B8 (265 aa).

This is Protein B8 (B8) from Homo sapiens (Human).